The following is a 40-amino-acid chain: U2-myrmicitoxin-Tb1a (40 aa).

A signal peptide spans 1-3 (AEA). A propeptide spanning residues 4–29 (MAEAMADAMADAMADAMADAMAEAAA) is cleaved from the precursor. The residue at position 39 (arginine 39) is an Arginine amide.

The protein belongs to the formicidae venom precursor-01 superfamily. As to expression, expressed by the venom gland.

It is found in the secreted. Its function is as follows. Venom protein with unknown function. Does not induce paralysis when a high dose is administered by intrathoracic injection into the blowfly Lucilia caesar. This is U2-myrmicitoxin-Tb1a from Tetramorium bicarinatum (Tramp ant).